The sequence spans 217 residues: ATP synthase subunit 4, mitochondrial (217 aa).

The transit peptide at 1–14 directs the protein to the mitochondrion; that stretch reads MPFARVGALSARHY. The next 2 membrane-spanning stretches (helical) occupy residues 41–61 and 66–86; these read GVLA…LYIV and IVLG…GPGY.

F-type ATP synthases have 2 components, the catalytic core F(1) and the membrane-embedded component F(0), linked together by a central stalk and a peripheral stalk. The central stalk, also called rotor shaft, is often seen as part of F(1). The peripheral stalk is seen as part of F(0). F(0) contains the membrane channel next to the rotor. F-type ATP synthases form dimers but each monomer functions independently in ATP generation. The dimer consists of 17 different polypeptides: ATP1 (subunit alpha, 3 molecules per monomer, part of F(1)), ATP2 (subunit beta, 3 copies per monomer, part of F(1)), ATP3 (subunit gamma, part of the central stalk), ATP4 (subunit b, part of the peripheral stalk), ATP5/OSCP (subunit 5/OSCP, part of the peripheral stalk), ATP6 (subunit a, part of the peripheral stalk), ATP7 (subunit d, part of the peripheral stalk), ATP8 (subunit 8, part of the peripheral stalk), OLI1 (subunit c, part of the rotor, 10 molecules per monomer), ATP14 (subunit h, part of the peripheral stalk), ATP15 (subunit epsilon, part of the central stalk), ATP16 (subunit delta, part of the central stalk), ATP17 (subunit f, part of the peripheral stalk), ATP18 (subunit i/j, part of the peripheral stalk), ATP19 (subunit k, dimer-specific, at interface between monomers), ATP20 (subunit g, at interface between monomers), TIM11 (subunit e, at interface between monomers).

It localises to the mitochondrion inner membrane. Functionally, mitochondrial membrane ATP synthase (F(1)F(0) ATP synthase or Complex V) produces ATP from ADP in the presence of a proton gradient across the membrane which is generated by electron transport complexes of the respiratory chain. F-type ATP synthases consist of two structural domains, F(1) - containing the extramembraneous catalytic core, and F(0) - containing the membrane proton channel, linked together by a central stalk and a peripheral stalk. During catalysis, ATP synthesis in the catalytic domain of F(1) is coupled via a rotary mechanism of the central stalk subunits to proton translocation. Part of the complex F(0) domain and the peripheral stalk, which acts as a stator to hold the catalytic alpha/ATP1(3)beta/ATP2(3) subcomplex and subunit a/ATP6 static relative to the rotary elements. This Yarrowia lipolytica (strain CLIB 122 / E 150) (Yeast) protein is ATP synthase subunit 4, mitochondrial.